A 74-amino-acid polypeptide reads, in one-letter code: Molt-inhibiting hormone (74 aa).

The residue at position 1 (glutamine 1) is a Pyrrolidone carboxylic acid. 3 disulfides stabilise this stretch: cysteine 7-cysteine 43, cysteine 23-cysteine 39, and cysteine 26-cysteine 52. Valine amide is present on valine 72.

Its subcellular location is the secreted. Inhibits Y-organs where molting hormone (ecdysteroid) is secreted. A molting cycle is initiated when MIH secretion diminishes or stops. The polypeptide is Molt-inhibiting hormone (Procambarus bouvieri (Mexican crayfish)).